We begin with the raw amino-acid sequence, 217 residues long: Ribulose-phosphate 3-epimerase (217 aa).

Residue serine 7 participates in substrate binding. A divalent metal cation contacts are provided by histidine 32, aspartate 34, and histidine 65. Catalysis depends on aspartate 34, which acts as the Proton acceptor. Substrate contacts are provided by residues histidine 65, 141–144, 175–177, and 197–198; these read GFGG, DGG, and GS. Aspartate 175 contacts a divalent metal cation. Aspartate 175 serves as the catalytic Proton donor.

Belongs to the ribulose-phosphate 3-epimerase family. A divalent metal cation serves as cofactor.

The enzyme catalyses D-ribulose 5-phosphate = D-xylulose 5-phosphate. The protein operates within carbohydrate degradation. Catalyzes the reversible epimerization of D-ribulose 5-phosphate to D-xylulose 5-phosphate. The protein is Ribulose-phosphate 3-epimerase of Bacillus subtilis (strain 168).